The primary structure comprises 72 residues: Translation initiation factor IF-1 1 (72 aa).

The 72-residue stretch at 1-72 (MSKDDVIQMA…TRARIIFRAK (72 aa)) folds into the S1-like domain.

The protein belongs to the IF-1 family. As to quaternary structure, component of the 30S ribosomal translation pre-initiation complex which assembles on the 30S ribosome in the order IF-2 and IF-3, IF-1 and N-formylmethionyl-tRNA(fMet); mRNA recruitment can occur at any time during PIC assembly.

It is found in the cytoplasm. In terms of biological role, one of the essential components for the initiation of protein synthesis. Stabilizes the binding of IF-2 and IF-3 on the 30S subunit to which N-formylmethionyl-tRNA(fMet) subsequently binds. Helps modulate mRNA selection, yielding the 30S pre-initiation complex (PIC). Upon addition of the 50S ribosomal subunit IF-1, IF-2 and IF-3 are released leaving the mature 70S translation initiation complex. This chain is Translation initiation factor IF-1 1, found in Polynucleobacter asymbioticus (strain DSM 18221 / CIP 109841 / QLW-P1DMWA-1) (Polynucleobacter necessarius subsp. asymbioticus).